Reading from the N-terminus, the 429-residue chain is 4-hydroxyphenylacetate degradation bifunctional isomerase/decarboxylase (429 aa).

2 Approximate repeats span residues Met-1–Phe-215 and Thr-216–Asn-429. Positions 276, 278, and 307 each coordinate a divalent metal cation.

Belongs to the FAH family. As to quaternary structure, monomer. Mg(2+) is required as a cofactor.

The catalysed reaction is (2E,4Z)-5-hydroxypenta-2,4-diene-1,2,5-tricarboxylate = (3E,5R)-5-carboxy-2-oxohept-3-enedioate. The enzyme catalyses (3E,5R)-5-carboxy-2-oxohept-3-enedioate + H(+) = (4Z)-2-oxohept-4-enedioate + CO2. It participates in aromatic compound metabolism; 4-hydroxyphenylacetate degradation; pyruvate and succinate semialdehyde from 4-hydroxyphenylacetate: step 4/7. Its pathway is aromatic compound metabolism; 4-hydroxyphenylacetate degradation; pyruvate and succinate semialdehyde from 4-hydroxyphenylacetate: step 5/7. In terms of biological role, decarboxylates OPET (5-oxo-pent-3-ene-1,2,5-tricarboxylic acid) into HHDD (2-hydroxy-hept-2,4-diene-1,7-dioate) and isomerizes it to OHED (2-oxo-hept-3-ene-1,7-dioate). The polypeptide is 4-hydroxyphenylacetate degradation bifunctional isomerase/decarboxylase (hpaG) (Salmonella dublin).